The sequence spans 351 residues: GMP reductase (351 aa).

108-131 (EDFVKLKQILSLSSKLKYICIDVA) is an NADP(+) binding site. K(+) contacts are provided by Gly-181 and Gly-183. Cys-186 (thioimidate intermediate) is an active-site residue. Position 216–239 (216–239 (IISDGGCVVSGDIAKAFGGGADFV)) interacts with NADP(+).

The protein belongs to the IMPDH/GMPR family. GuaC type 1 subfamily. Homotetramer.

The catalysed reaction is IMP + NH4(+) + NADP(+) = GMP + NADPH + 2 H(+). Functionally, catalyzes the irreversible NADPH-dependent deamination of GMP to IMP. It functions in the conversion of nucleobase, nucleoside and nucleotide derivatives of G to A nucleotides, and in maintaining the intracellular balance of A and G nucleotides. This chain is GMP reductase (guaC), found in Buchnera aphidicola subsp. Baizongia pistaciae (strain Bp).